The chain runs to 453 residues: Signal recognition particle protein (453 aa).

GTP-binding positions include 107–114 (GLQGAGKT), 190–194 (DTAGR), and 248–251 (TKVD).

The protein belongs to the GTP-binding SRP family. SRP54 subfamily. Part of the signal recognition particle protein translocation system, which is composed of SRP and FtsY. SRP is a ribonucleoprotein composed of Ffh and a 4.5S RNA molecule.

It is found in the cytoplasm. It catalyses the reaction GTP + H2O = GDP + phosphate + H(+). Functionally, involved in targeting and insertion of nascent membrane proteins into the cytoplasmic membrane. Binds to the hydrophobic signal sequence of the ribosome-nascent chain (RNC) as it emerges from the ribosomes. The SRP-RNC complex is then targeted to the cytoplasmic membrane where it interacts with the SRP receptor FtsY. Interaction with FtsY leads to the transfer of the RNC complex to the Sec translocase for insertion into the membrane, the hydrolysis of GTP by both Ffh and FtsY, and the dissociation of the SRP-FtsY complex into the individual components. The sequence is that of Signal recognition particle protein from Escherichia coli O157:H7.